A 538-amino-acid chain; its full sequence is MIVLICLGIEGTAEKTGVGIVDSDGNILAMAGEQLFPEKGGIHPRIAAEHHGYWIPKLIPKAIDEAGISYDDLDLISFSQGPGLGPALRIVATSARTLALSLNKPIIGVNHCIGHVEVGKLDTGAVNPVTLYVSGGNSQVISHESGRYRIFGETLDIAAGNCLDHFGRETGLGHPGGPVIEKLAKKGSYVDLPYVVKGMDFSFSGLLSAALREVKKGTPIEDVCFSLQETAFSMLVEVTERALSHTQKDEVMLCGGVSANSRLREMLKVMAEEHGAKFCMPEMKLCGDNGVMIAWLGLIMHNQFGPLDIKDTGIIQRFRTDEVEAPWVNNNDSHLKLPDNLIAKGAESDIIKSSYLGKNAVLKSRIPKAYRIAEIDSKIRKSRTKLEAKLLSDVKKSGVITPVLYDVDLENKSILMEAIEGKMLKEVIDDNLAYKIGVEIAKIHSLDIIHGDITTSNMMLRGGKLVFLDFGLGRHSDLFEDKAVDLLVLKKSLQSIDNTTASKYFDNVLEGYAESYGKNKDKIIEKIKEIESRGRYTH.

Residues 1 to 327 (MIVLICLGIE…FRTDEVEAPW (327 aa)) form a kae1 region. Fe cation contacts are provided by His-111, His-115, and Tyr-132. L-threonylcarbamoyladenylate-binding positions include 132–136 (YVSGG), Asp-164, Gly-177, Glu-181, and Asn-260. Asp-288 is a Fe cation binding site. The Protein kinase domain occupies 336–538 (KLPDNLIAKG…EIESRGRYTH (203 aa)). Residues 342 to 350 (IAKGAESDI) and Lys-363 each bind ATP. Residue Asp-452 is the Proton acceptor; for kinase activity of the active site.

This sequence in the N-terminal section; belongs to the KAE1 / TsaD family. In the C-terminal section; belongs to the protein kinase superfamily. Tyr protein kinase family. BUD32 subfamily. Component of the KEOPS complex that consists of Kae1, Bud32, Cgi121 and Pcc1; the whole complex dimerizes. The cofactor is Fe(2+).

The protein resides in the cytoplasm. It catalyses the reaction L-seryl-[protein] + ATP = O-phospho-L-seryl-[protein] + ADP + H(+). It carries out the reaction L-threonyl-[protein] + ATP = O-phospho-L-threonyl-[protein] + ADP + H(+). The enzyme catalyses L-threonylcarbamoyladenylate + adenosine(37) in tRNA = N(6)-L-threonylcarbamoyladenosine(37) in tRNA + AMP + H(+). Functionally, required for the formation of a threonylcarbamoyl group on adenosine at position 37 (t(6)A37) in tRNAs that read codons beginning with adenine. Is a component of the KEOPS complex that is probably involved in the transfer of the threonylcarbamoyl moiety of threonylcarbamoyl-AMP (TC-AMP) to the N6 group of A37. The Kae1 domain likely plays a direct catalytic role in this reaction. The Bud32 domain probably displays kinase activity that regulates Kae1 function. In Methanobrevibacter smithii (strain ATCC 35061 / DSM 861 / OCM 144 / PS), this protein is Probable bifunctional tRNA threonylcarbamoyladenosine biosynthesis protein.